A 442-amino-acid polypeptide reads, in one-letter code: Glutamyl-tRNA reductase (442 aa).

Residues 49-52 (TCNR), serine 109, 114-116 (ESQ), and glutamine 120 each bind substrate. The active-site Nucleophile is the cysteine 50. 189 to 194 (GAGAMS) contacts NADP(+).

It belongs to the glutamyl-tRNA reductase family. Homodimer.

It catalyses the reaction (S)-4-amino-5-oxopentanoate + tRNA(Glu) + NADP(+) = L-glutamyl-tRNA(Glu) + NADPH + H(+). It participates in porphyrin-containing compound metabolism; protoporphyrin-IX biosynthesis; 5-aminolevulinate from L-glutamyl-tRNA(Glu): step 1/2. Its function is as follows. Catalyzes the NADPH-dependent reduction of glutamyl-tRNA(Glu) to glutamate 1-semialdehyde (GSA). The sequence is that of Glutamyl-tRNA reductase from Kineococcus radiotolerans (strain ATCC BAA-149 / DSM 14245 / SRS30216).